The chain runs to 32 residues: MEALVYTFLLIGTLMVIFFAVFFRDTPRILKK.

A helical transmembrane segment spans residues 3–23; sequence ALVYTFLLIGTLMVIFFAVFF.

It belongs to the PsbT family. PSII is composed of 1 copy each of membrane proteins PsbA, PsbB, PsbC, PsbD, PsbE, PsbF, PsbH, PsbI, PsbJ, PsbK, PsbL, PsbM, PsbT, PsbX, PsbY, PsbZ, Psb30/Ycf12, at least 3 peripheral proteins of the oxygen-evolving complex and a large number of cofactors. It forms dimeric complexes.

The protein resides in the plastid. It is found in the chloroplast thylakoid membrane. In terms of biological role, found at the monomer-monomer interface of the photosystem II (PS II) dimer, plays a role in assembly and dimerization of PSII. PSII is a light-driven water plastoquinone oxidoreductase, using light energy to abstract electrons from H(2)O, generating a proton gradient subsequently used for ATP formation. The polypeptide is Photosystem II reaction center protein T (Thalassiosira pseudonana (Marine diatom)).